A 171-amino-acid polypeptide reads, in one-letter code: MEKFYKVGTIVNTQGLQGEVRVMPSTDFAQERFSKGSVLALFDDKDNYIQDLKVKSGRPQKNFYVVKFEGFYHINDVEKYKGYIVKIAEENQEDLDDGEFYYHEIIGSDVYENDILIGQISEILQPGANDVWVVKRKGKRDLLLPYIPPVILNVDVNQHRVDVSIMEGLDD.

Positions 97–169 constitute a PRC barrel domain; that stretch reads DGEFYYHEII…RVDVSIMEGL (73 aa).

Belongs to the RimM family. Binds ribosomal protein uS19.

The protein resides in the cytoplasm. Functionally, an accessory protein needed during the final step in the assembly of 30S ribosomal subunit, possibly for assembly of the head region. Essential for efficient processing of 16S rRNA. May be needed both before and after RbfA during the maturation of 16S rRNA. It has affinity for free ribosomal 30S subunits but not for 70S ribosomes. In Lactococcus lactis subsp. lactis (strain IL1403) (Streptococcus lactis), this protein is Ribosome maturation factor RimM.